The primary structure comprises 315 residues: Aspartate carbamoyltransferase catalytic subunit (315 aa).

Carbamoyl phosphate is bound by residues Arg-61 and Thr-62. Residue Lys-90 coordinates L-aspartate. Carbamoyl phosphate contacts are provided by Arg-111, His-139, and Gln-142. L-aspartate is bound by residues Arg-172 and Arg-234. 2 residues coordinate carbamoyl phosphate: Leu-274 and Pro-275.

Belongs to the aspartate/ornithine carbamoyltransferase superfamily. ATCase family. Heterooligomer of catalytic and regulatory chains.

It catalyses the reaction carbamoyl phosphate + L-aspartate = N-carbamoyl-L-aspartate + phosphate + H(+). The protein operates within pyrimidine metabolism; UMP biosynthesis via de novo pathway; (S)-dihydroorotate from bicarbonate: step 2/3. In terms of biological role, catalyzes the condensation of carbamoyl phosphate and aspartate to form carbamoyl aspartate and inorganic phosphate, the committed step in the de novo pyrimidine nucleotide biosynthesis pathway. This Hyperthermus butylicus (strain DSM 5456 / JCM 9403 / PLM1-5) protein is Aspartate carbamoyltransferase catalytic subunit.